The sequence spans 78 residues: Cytochrome c oxidase subunit 8, mitochondrial (78 aa).

The transit peptide at 1 to 27 directs the protein to the mitochondrion; it reads MLCQQMIRTTAKRSSNIMTRPIIMKRS. At 28–51 the chain is on the mitochondrial matrix side; the sequence is VHFKDGVYENIPFKVKGRKTPYAL. The chain crosses the membrane as a helical span at residues 52–73; the sequence is SHFGFFAIGFAVPFVACYVQLK. A topological domain (mitochondrial intermembrane) is located at residue lysine 74. A propeptide spanning residues 75 to 78 is cleaved from the precursor; the sequence is SGAF.

The protein belongs to the cytochrome c oxidase VIIc family. Component of the cytochrome c oxidase (complex IV, CIV), a multisubunit enzyme composed of 12 subunits. The complex is composed of a catalytic core of 3 subunits COX1, COX2 and COX3, encoded in the mitochondrial DNA, and 9 supernumerary subunits COX4, COX5A (or COX5B), COX6, COX7, COX8, COX9, COX12, COX13 and COX26, which are encoded in the nuclear genome. The complex exists as a monomer or a dimer and forms supercomplexes (SCs) in the inner mitochondrial membrane with a dimer of ubiquinol-cytochrome c oxidoreductase (cytochrome b-c1 complex, complex III, CIII), resulting in 2 different assemblies (supercomplexes III(2)IV and III(2)IV(2)).

It is found in the mitochondrion inner membrane. The protein operates within energy metabolism; oxidative phosphorylation. In terms of biological role, component of the cytochrome c oxidase, the last enzyme in the mitochondrial electron transport chain which drives oxidative phosphorylation. The respiratory chain contains 3 multisubunit complexes succinate dehydrogenase (complex II, CII), ubiquinol-cytochrome c oxidoreductase (cytochrome b-c1 complex, complex III, CIII) and cytochrome c oxidase (complex IV, CIV), that cooperate to transfer electrons derived from NADH and succinate to molecular oxygen, creating an electrochemical gradient over the inner membrane that drives transmembrane transport and the ATP synthase. Cytochrome c oxidase is the component of the respiratory chain that catalyzes the reduction of oxygen to water. Electrons originating from reduced cytochrome c in the intermembrane space (IMS) are transferred via the dinuclear copper A center (CU(A)) of COX2 and heme A of COX1 to the active site in COX1, a binuclear center (BNC) formed by heme A3 and copper B (CU(B)). The BNC reduces molecular oxygen to 2 water molecules using 4 electrons from cytochrome c in the IMS and 4 protons from the mitochondrial matrix. The chain is Cytochrome c oxidase subunit 8, mitochondrial (COX8) from Saccharomyces cerevisiae (strain ATCC 204508 / S288c) (Baker's yeast).